Reading from the N-terminus, the 277-residue chain is Anamorsin homolog (277 aa).

The tract at residues Met-1 to Lys-160 is N-terminal SAM-like domain. Residues Ser-161–Leu-188 form a linker region. Residues Cys-199, Cys-208, Cys-211, and Cys-213 each contribute to the [2Fe-2S] cluster site. Positions Cys-199–Cys-213 are fe-S binding site A. 4 residues coordinate [4Fe-4S] cluster: Cys-238, Cys-241, Cys-249, and Cys-252. 2 short sequence motifs (cx2C motif) span residues Cys-238–Cys-241 and Cys-249–Cys-252. Residues Cys-238–Cys-252 form a fe-S binding site B region.

It belongs to the anamorsin family. In terms of assembly, monomer. [2Fe-2S] cluster serves as cofactor. Requires [4Fe-4S] cluster as cofactor.

The protein localises to the cytoplasm. Its subcellular location is the mitochondrion intermembrane space. Component of the cytosolic iron-sulfur (Fe-S) protein assembly (CIA) machinery. Required for the maturation of extramitochondrial Fe-S proteins. Part of an electron transfer chain functioning in an early step of cytosolic Fe-S biogenesis, facilitating the de novo assembly of a [4Fe-4S] cluster on the cytosolic Fe-S scaffold complex. Electrons are transferred from NADPH via a FAD- and FMN-containing diflavin oxidoreductase. Together with the diflavin oxidoreductase, also required for the assembly of the diferric tyrosyl radical cofactor of ribonucleotide reductase (RNR), probably by providing electrons for reduction during radical cofactor maturation in the catalytic small subunit. The chain is Anamorsin homolog from Populus trichocarpa (Western balsam poplar).